The chain runs to 102 residues: uncharacterized protein (102 aa).

The interval 1–102 is disordered; it reads MPVEQDGLTG…LANIREQNHQ (102 aa).

This is an uncharacterized protein from Caenorhabditis elegans.